The chain runs to 319 residues: Coproporphyrin III ferrochelatase 2 (319 aa).

Fe-coproporphyrin III-binding positions include tyrosine 13, arginine 30, 46-47 (RY), serine 54, and tyrosine 125. Fe(2+) contacts are provided by histidine 181 and glutamate 262.

The protein belongs to the ferrochelatase family.

The protein localises to the cytoplasm. It catalyses the reaction Fe-coproporphyrin III + 2 H(+) = coproporphyrin III + Fe(2+). It participates in porphyrin-containing compound metabolism; protoheme biosynthesis. In terms of biological role, involved in coproporphyrin-dependent heme b biosynthesis. Catalyzes the insertion of ferrous iron into coproporphyrin III to form Fe-coproporphyrin III. The chain is Coproporphyrin III ferrochelatase 2 from Bacillus cereus (strain ATCC 14579 / DSM 31 / CCUG 7414 / JCM 2152 / NBRC 15305 / NCIMB 9373 / NCTC 2599 / NRRL B-3711).